A 194-amino-acid polypeptide reads, in one-letter code: Imidazoleglycerol-phosphate dehydratase (194 aa).

This sequence belongs to the imidazoleglycerol-phosphate dehydratase family.

The protein localises to the cytoplasm. It catalyses the reaction D-erythro-1-(imidazol-4-yl)glycerol 3-phosphate = 3-(imidazol-4-yl)-2-oxopropyl phosphate + H2O. Its pathway is amino-acid biosynthesis; L-histidine biosynthesis; L-histidine from 5-phospho-alpha-D-ribose 1-diphosphate: step 6/9. This chain is Imidazoleglycerol-phosphate dehydratase, found in Streptococcus gordonii (strain Challis / ATCC 35105 / BCRC 15272 / CH1 / DL1 / V288).